We begin with the raw amino-acid sequence, 493 residues long: Glutamyl-tRNA(Gln) amidotransferase subunit A (493 aa).

Catalysis depends on charge relay system residues Lys78 and Ser158. The active-site Acyl-ester intermediate is Ser182.

It belongs to the amidase family. GatA subfamily. In terms of assembly, heterotrimer of A, B and C subunits.

It catalyses the reaction L-glutamyl-tRNA(Gln) + L-glutamine + ATP + H2O = L-glutaminyl-tRNA(Gln) + L-glutamate + ADP + phosphate + H(+). Functionally, allows the formation of correctly charged Gln-tRNA(Gln) through the transamidation of misacylated Glu-tRNA(Gln) in organisms which lack glutaminyl-tRNA synthetase. The reaction takes place in the presence of glutamine and ATP through an activated gamma-phospho-Glu-tRNA(Gln). The polypeptide is Glutamyl-tRNA(Gln) amidotransferase subunit A (Rickettsia bellii (strain OSU 85-389)).